A 469-amino-acid polypeptide reads, in one-letter code: Aspartyl/glutamyl-tRNA(Asn/Gln) amidotransferase subunit B (469 aa).

The protein belongs to the GatB/GatE family. GatB subfamily. In terms of assembly, heterotrimer of A, B and C subunits.

The catalysed reaction is L-glutamyl-tRNA(Gln) + L-glutamine + ATP + H2O = L-glutaminyl-tRNA(Gln) + L-glutamate + ADP + phosphate + H(+). It catalyses the reaction L-aspartyl-tRNA(Asn) + L-glutamine + ATP + H2O = L-asparaginyl-tRNA(Asn) + L-glutamate + ADP + phosphate + 2 H(+). In terms of biological role, allows the formation of correctly charged Asn-tRNA(Asn) or Gln-tRNA(Gln) through the transamidation of misacylated Asp-tRNA(Asn) or Glu-tRNA(Gln) in organisms which lack either or both of asparaginyl-tRNA or glutaminyl-tRNA synthetases. The reaction takes place in the presence of glutamine and ATP through an activated phospho-Asp-tRNA(Asn) or phospho-Glu-tRNA(Gln). This is Aspartyl/glutamyl-tRNA(Asn/Gln) amidotransferase subunit B from Methanococcus maripaludis (strain C5 / ATCC BAA-1333).